Reading from the N-terminus, the 497-residue chain is Guanosine-5'-triphosphate,3'-diphosphate pyrophosphatase (497 aa).

It belongs to the GppA/Ppx family. GppA subfamily.

The catalysed reaction is guanosine 3'-diphosphate 5'-triphosphate + H2O = guanosine 3',5'-bis(diphosphate) + phosphate + H(+). It participates in purine metabolism; ppGpp biosynthesis; ppGpp from GTP: step 2/2. In terms of biological role, catalyzes the conversion of pppGpp to ppGpp. Guanosine pentaphosphate (pppGpp) is a cytoplasmic signaling molecule which together with ppGpp controls the 'stringent response', an adaptive process that allows bacteria to respond to amino acid starvation, resulting in the coordinated regulation of numerous cellular activities. The chain is Guanosine-5'-triphosphate,3'-diphosphate pyrophosphatase from Pseudoalteromonas translucida (strain TAC 125).